Consider the following 76-residue polypeptide: Gallerimycin (76 aa).

An N-terminal signal peptide occupies residues 1-19; it reads MKIAFIVAISLAFLAVTSC.

This sequence belongs to the invertebrate defensin family.

Its function is as follows. Has antifungal activity against the entomopathogenic fungus M.nisopliae, but does not display any antifungal activity against S.cerevisiae nor any antimicrobial activity against M.luteus, B.subtilis, and E.coli. The protein is Gallerimycin (LOC113523440) of Galleria mellonella (Greater wax moth).